Reading from the N-terminus, the 877-residue chain is Leucine--tRNA ligase (877 aa).

The 'HIGH' region signature appears at 43-53 (PYPSGRIHMGH). Positions 628–632 (KMSKS) match the 'KMSKS' region motif. Lys631 is a binding site for ATP.

The protein belongs to the class-I aminoacyl-tRNA synthetase family.

The protein resides in the cytoplasm. It carries out the reaction tRNA(Leu) + L-leucine + ATP = L-leucyl-tRNA(Leu) + AMP + diphosphate. The sequence is that of Leucine--tRNA ligase from Brucella anthropi (strain ATCC 49188 / DSM 6882 / CCUG 24695 / JCM 21032 / LMG 3331 / NBRC 15819 / NCTC 12168 / Alc 37) (Ochrobactrum anthropi).